Consider the following 178-residue polypeptide: Cytidylate kinase (178 aa).

An ATP-binding site is contributed by 7-15 (GLPGSGTTS).

This sequence belongs to the cytidylate kinase family. Type 2 subfamily.

It localises to the cytoplasm. It catalyses the reaction CMP + ATP = CDP + ADP. The catalysed reaction is dCMP + ATP = dCDP + ADP. This Methanospirillum hungatei JF-1 (strain ATCC 27890 / DSM 864 / NBRC 100397 / JF-1) protein is Cytidylate kinase.